Consider the following 120-residue polypeptide: Small ribosomal subunit protein bS6 (120 aa).

Residues 97–112 (SNEPSPILKNQSTENT) show a composition bias toward polar residues. Residues 97 to 120 (SNEPSPILKNQSTENTPVIDVTAN) are disordered.

Belongs to the bacterial ribosomal protein bS6 family.

In terms of biological role, binds together with bS18 to 16S ribosomal RNA. The chain is Small ribosomal subunit protein bS6 from Rickettsia bellii (strain OSU 85-389).